A 216-amino-acid polypeptide reads, in one-letter code: Cytidylate kinase (216 aa).

7 to 15 (GPSGTGKST) is an ATP binding site.

It belongs to the cytidylate kinase family. Type 1 subfamily.

The protein resides in the cytoplasm. It carries out the reaction CMP + ATP = CDP + ADP. The catalysed reaction is dCMP + ATP = dCDP + ADP. In Chlamydia trachomatis serovar L2 (strain ATCC VR-902B / DSM 19102 / 434/Bu), this protein is Cytidylate kinase.